Here is a 140-residue protein sequence, read N- to C-terminus: uncharacterized protein (140 aa).

An N-linked (GlcNAc...) asparagine glycan is attached at Asn36. Residues 91–107 (LFMSLIGLCVCYMNLVF) form a helical membrane-spanning segment. The span at 113-122 (QPSSSGSKGN) shows a compositional bias: polar residues. The tract at residues 113–140 (QPSSSGSKGNTETTIETTTEVETETAKQ) is disordered. A compositionally biased stretch (acidic residues) spans 131–140 (TEVETETAKQ).

It localises to the endoplasmic reticulum membrane. This is an uncharacterized protein from Saccharomyces cerevisiae (strain ATCC 204508 / S288c) (Baker's yeast).